The following is a 662-amino-acid chain: Glycogen debranching enzyme (662 aa).

Asp338 (nucleophile) is an active-site residue. Catalysis depends on Glu373, which acts as the Proton donor.

It belongs to the glycosyl hydrolase 13 family.

It catalyses the reaction Hydrolysis of (1-&gt;6)-alpha-D-glucosidic linkages to branches with degrees of polymerization of three or four glucose residues in limit dextrin.. It participates in glycan degradation; glycogen degradation. Its function is as follows. Removes maltotriose and maltotetraose chains that are attached by 1,6-alpha-linkage to the limit dextrin main chain, generating a debranched limit dextrin. The protein is Glycogen debranching enzyme of Yersinia pestis bv. Antiqua (strain Angola).